Reading from the N-terminus, the 87-residue chain is Small ribosomal subunit protein bS20 (87 aa).

The tract at residues 1–22 (MAHHKSAIKRIKQNAKKNARNR) is disordered.

It belongs to the bacterial ribosomal protein bS20 family.

Its function is as follows. Binds directly to 16S ribosomal RNA. The protein is Small ribosomal subunit protein bS20 of Pelobacter propionicus (strain DSM 2379 / NBRC 103807 / OttBd1).